We begin with the raw amino-acid sequence, 456 residues long: N(6)-adenosine-methyltransferase non-catalytic subunit METTL14 (456 aa).

The tract at residues 43 to 74 (EIAETRETSRASYDTSAAVSKRKLPEEGKADE) is disordered. Residues 65–74 (KLPEEGKADE) show a composition bias toward basic and acidic residues. Interaction with METTL3 stretches follow at residues 135–136 (RD) and 237–238 (SG). The segment at 245–254 (RMCLRKWGFR) is positively charged region required for RNA-binding. Interaction with METTL3 regions lie at residues 255-258 (RSED) and 278-287 (KAIFQRTKEH). Residues 297 to 298 (HR) form a positively charged region required for RNA-binding region. The interval 308 to 312 (NVDID) is interaction with METTL3. Residues 395–456 (LRPKTPPPKS…GPHRGVFAPR (62 aa)) form a disordered region. Positions 410–421 (ASRGGGRGGASA) are enriched in gly residues. The span at 423–441 (RGERGRERNRGSFRGDRGN) shows a compositional bias: basic and acidic residues.

The protein belongs to the MT-A70-like family. Heterodimer; heterodimerizes with mettl3 to form an antiparallel heterodimer that constitutes an active methyltransferase. Component of the WMM complex, a N6-methyltransferase complex composed of a catalytic subcomplex, named MAC, and of an associated subcomplex, named MACOM. The MAC subcomplex is composed of mettl3 and mettl14.

The protein resides in the nucleus. Functionally, the METTL3-METTL14 heterodimer forms a N6-methyltransferase complex that methylates adenosine residues at the N(6) position of some mRNAs and regulates the circadian clock, differentiation of embryonic stem cells and cortical neurogenesis. In the heterodimer formed with mettl3, mettl14 constitutes the RNA-binding scaffold that recognizes the substrate rather than the catalytic core. N6-methyladenosine (m6A), which takes place at the 5'-[AG]GAC-3' consensus sites of some mRNAs, plays a role in mRNA stability and processing. The sequence is that of N(6)-adenosine-methyltransferase non-catalytic subunit METTL14 (mettl14) from Xenopus laevis (African clawed frog).